Reading from the N-terminus, the 443-residue chain is Thymidine phosphorylase (443 aa).

The protein belongs to the thymidine/pyrimidine-nucleoside phosphorylase family. In terms of assembly, homodimer.

It carries out the reaction thymidine + phosphate = 2-deoxy-alpha-D-ribose 1-phosphate + thymine. Its pathway is pyrimidine metabolism; dTMP biosynthesis via salvage pathway; dTMP from thymine: step 1/2. In terms of biological role, the enzymes which catalyze the reversible phosphorolysis of pyrimidine nucleosides are involved in the degradation of these compounds and in their utilization as carbon and energy sources, or in the rescue of pyrimidine bases for nucleotide synthesis. In Shewanella sp. (strain ANA-3), this protein is Thymidine phosphorylase.